We begin with the raw amino-acid sequence, 562 residues long: Arginine--tRNA ligase (562 aa).

The short motif at 129-139 (ANPTGPLHVGH) is the 'HIGH' region element.

Belongs to the class-I aminoacyl-tRNA synthetase family. Monomer.

It is found in the cytoplasm. The catalysed reaction is tRNA(Arg) + L-arginine + ATP = L-arginyl-tRNA(Arg) + AMP + diphosphate. This Xanthomonas axonopodis pv. citri (strain 306) protein is Arginine--tRNA ligase.